We begin with the raw amino-acid sequence, 334 residues long: Ferredoxin--NADP reductase (334 aa).

Positions 33, 41, 46, 86, 120, 286, and 327 each coordinate FAD.

Belongs to the ferredoxin--NADP reductase type 2 family. Homodimer. The cofactor is FAD.

It catalyses the reaction 2 reduced [2Fe-2S]-[ferredoxin] + NADP(+) + H(+) = 2 oxidized [2Fe-2S]-[ferredoxin] + NADPH. This is Ferredoxin--NADP reductase from Rickettsia akari (strain Hartford).